A 697-amino-acid polypeptide reads, in one-letter code: MTELSKYRNIGIFAHVDAGKTTTTERILKLTGKIHKIGEVHDGESTTDFMVQEAERGITIQSAAVSCFWNDHRFNVIDTPGHVDFTVEVYRSLKVLDGGVGVFCGSGGVEPQSETNWRYANDSEVARIIFVNKLDRMGADFLRVVKQTKDVLAANPLVMVLPIGIEDEFCGVVDLLTRKAHIWDDSGLPENFEIKDVPADMVDLVEEYREMLIEAAVEQDDDLLESYMEGVEPSMEDIKRCIRKGTRTLTFFPTYCGSAFKNKGMQLLLDAVVDYLPAPDEVDPQPLTDEEGVENGEFAIVDADLPLKALAFKIMDDRFGALTFVRIYSGRLKKGDTILNSFTGKSERVGRMVEMYADDRIEIESAQAGDIIAIVGMKNVQTGHTLCDPKHPCTLEAMVFPEPVISIAVAPKDKGGSEKMGIAIGKMIAEDPSFRVETDEDSGETILKGMGELHLDIKVDILKRTYGVELIVGEPQVAYRETITAEVEDSYTHKKQSGGSGQFGKIDYKIRPGEANTGFVFKSSVVGGNVPKEFWPAVQKGFGSMMNTGTIAGFPVLDVEFELTDGAFHAVDSSAIAFEIAAKGAFRQSIAKAKPQLLEPIMKVDVFSPDDNVGDVIGDLNRRRGMIKDQNAGVTGVRIKADVPLSEMFGYIGTLRTMTSGRGQFSMEFAHYAACPNSVSEKVVTQVKERKAAEAKK.

The tr-type G domain maps to 5 to 280; sequence SKYRNIGIFA…AVVDYLPAPD (276 aa). Residues 14–21, 78–82, and 132–135 contribute to the GTP site; these read AHVDAGKT, DTPGH, and NKLD.

The protein belongs to the TRAFAC class translation factor GTPase superfamily. Classic translation factor GTPase family. EF-G/EF-2 subfamily.

Its subcellular location is the cytoplasm. Catalyzes the GTP-dependent ribosomal translocation step during translation elongation. During this step, the ribosome changes from the pre-translocational (PRE) to the post-translocational (POST) state as the newly formed A-site-bound peptidyl-tRNA and P-site-bound deacylated tRNA move to the P and E sites, respectively. Catalyzes the coordinated movement of the two tRNA molecules, the mRNA and conformational changes in the ribosome. In Shewanella denitrificans (strain OS217 / ATCC BAA-1090 / DSM 15013), this protein is Elongation factor G 2.